A 756-amino-acid polypeptide reads, in one-letter code: Lysyl oxidase homolog 4 (756 aa).

The signal sequence occupies residues 1–24; that stretch reads MAWSPPATLFLFLLLLGQPPPSRP. SRCR domains are found at residues 32 to 133, 159 to 287, 311 to 411, and 421 to 529; these read LRLV…VICH, VRLK…VSCV, VRLR…VRCN, and VRLA…VSCM. 17 disulfides stabilise this stretch: C58/C122, C71/C132, C102/C112, C191/C276, C204/C286, C251/C261, C336/C400, C349/C410, C380/C390, C450/C515, C463/C528, C497/C507, C558/C564, C610/C658, C642/C648, C670/C680, and C717/C731. An N-linked (GlcNAc...) asparagine glycan is attached at N198. Positions 533–736 are lysyl-oxidase like; the sequence is PDLVMNAQLV…WLHNCHTGNS (204 aa). Cu cation-binding residues include H611, H613, and H615. N-linked (GlcNAc...) asparagine glycosylation occurs at N629. The lysine tyrosylquinone (Lys-Tyr) cross-link spans 638–674; it reads KASFCLEDTNCPTGLQRRYACANFGEQGVTVGCWDTY. Position 674 is a 2',4',5'-topaquinone (Y674).

It belongs to the lysyl oxidase family. Cu cation is required as a cofactor. The cofactor is lysine tyrosylquinone residue. In terms of processing, the lysine tyrosylquinone cross-link (LTQ) is generated by condensation of the epsilon-amino group of a lysine with a topaquinone produced by oxidation of tyrosine. Post-translationally, may be proteolytically cleaved by BMP1. Expressed in many tissues, the highest levels among the tissues studied being in the skeletal muscle, testis and pancreas. Expressed in cartilage.

It localises to the secreted. The protein resides in the extracellular space. The enzyme catalyses L-lysyl-[protein] + O2 + H2O = (S)-2-amino-6-oxohexanoyl-[protein] + H2O2 + NH4(+). Inhibited by beta-aminopropionitrile (BAPN). Catalyzes the oxidative deamination of lysine and hydroxylysine residues in collagen and elastin, resulting in the formation of covalent cross-linkages, and the stabilization of collagen and elastin fibers. The protein is Lysyl oxidase homolog 4 (LOXL4) of Homo sapiens (Human).